Consider the following 329-residue polypeptide: Porphobilinogen deaminase (329 aa).

Cys-250 carries the S-(dipyrrolylmethanemethyl)cysteine modification.

Belongs to the HMBS family. As to quaternary structure, monomer. Dipyrromethane serves as cofactor.

It carries out the reaction 4 porphobilinogen + H2O = hydroxymethylbilane + 4 NH4(+). It participates in porphyrin-containing compound metabolism; protoporphyrin-IX biosynthesis; coproporphyrinogen-III from 5-aminolevulinate: step 2/4. Its function is as follows. Tetrapolymerization of the monopyrrole PBG into the hydroxymethylbilane pre-uroporphyrinogen in several discrete steps. This Burkholderia thailandensis (strain ATCC 700388 / DSM 13276 / CCUG 48851 / CIP 106301 / E264) protein is Porphobilinogen deaminase.